A 375-amino-acid chain; its full sequence is tRNA-specific 2-thiouridylase MnmA (375 aa).

ATP-binding positions include 18 to 25 (GMSGGVDS) and M44. The interaction with target base in tRNA stretch occupies residues 104-106 (NPD). C109 serves as the catalytic Nucleophile. C109 and C206 are disulfide-bonded. Residue G134 coordinates ATP. The interval 156–158 (KDQ) is interaction with tRNA. Residue C206 is the Cysteine persulfide intermediate of the active site. The interaction with tRNA stretch occupies residues 318-319 (RY).

The protein belongs to the MnmA/TRMU family.

It is found in the cytoplasm. The catalysed reaction is S-sulfanyl-L-cysteinyl-[protein] + uridine(34) in tRNA + AH2 + ATP = 2-thiouridine(34) in tRNA + L-cysteinyl-[protein] + A + AMP + diphosphate + H(+). Catalyzes the 2-thiolation of uridine at the wobble position (U34) of tRNA, leading to the formation of s(2)U34. The chain is tRNA-specific 2-thiouridylase MnmA from Colwellia psychrerythraea (strain 34H / ATCC BAA-681) (Vibrio psychroerythus).